The chain runs to 257 residues: Imidazole glycerol phosphate synthase subunit HisF (257 aa).

Residues D12 and D131 contribute to the active site.

It belongs to the HisA/HisF family. Heterodimer of HisH and HisF.

The protein localises to the cytoplasm. The enzyme catalyses 5-[(5-phospho-1-deoxy-D-ribulos-1-ylimino)methylamino]-1-(5-phospho-beta-D-ribosyl)imidazole-4-carboxamide + L-glutamine = D-erythro-1-(imidazol-4-yl)glycerol 3-phosphate + 5-amino-1-(5-phospho-beta-D-ribosyl)imidazole-4-carboxamide + L-glutamate + H(+). It functions in the pathway amino-acid biosynthesis; L-histidine biosynthesis; L-histidine from 5-phospho-alpha-D-ribose 1-diphosphate: step 5/9. IGPS catalyzes the conversion of PRFAR and glutamine to IGP, AICAR and glutamate. The HisF subunit catalyzes the cyclization activity that produces IGP and AICAR from PRFAR using the ammonia provided by the HisH subunit. The chain is Imidazole glycerol phosphate synthase subunit HisF from Saccharophagus degradans (strain 2-40 / ATCC 43961 / DSM 17024).